We begin with the raw amino-acid sequence, 215 residues long: Ubiquitin-conjugating enzyme E2 S (215 aa).

The UBC core domain maps to 9-155 (DVIKRVVKEL…AKLFTSIHAS (147 aa)). The active-site Glycyl thioester intermediate is cysteine 93. Residues 159–215 (IDSNNNNENSTTTPTTTTTATTPSTNTASISSPVKKKTETTNSTTTKVQPKKSLKRL) form a disordered region. A compositionally biased stretch (low complexity) spans 161 to 190 (SNNNNENSTTTPTTTTTATTPSTNTASISS).

The protein belongs to the ubiquitin-conjugating enzyme family.

The enzyme catalyses S-ubiquitinyl-[E1 ubiquitin-activating enzyme]-L-cysteine + [E2 ubiquitin-conjugating enzyme]-L-cysteine = [E1 ubiquitin-activating enzyme]-L-cysteine + S-ubiquitinyl-[E2 ubiquitin-conjugating enzyme]-L-cysteine.. It participates in protein modification; protein ubiquitination. Its function is as follows. Catalyzes the covalent attachment of ubiquitin to other proteins. Acts as an essential factor of the anaphase promoting complex/cyclosome (APC/C), a cell cycle-regulated ubiquitin ligase that controls progression through mitosis. Acts by specifically elongating polyubiquitin chains initiated by the E2 enzyme ubch10 on APC/C substrates, enhancing the degradation of APC/C substrates by the proteasome and promoting mitotic exit. This Dictyostelium discoideum (Social amoeba) protein is Ubiquitin-conjugating enzyme E2 S (ube2s).